A 672-amino-acid polypeptide reads, in one-letter code: Beta-galactosidase GanA (672 aa).

Arginine 105 lines the substrate pocket. Cysteine 109 serves as a coordination point for Zn(2+). Substrate is bound at residue asparagine 143. Glutamate 144 functions as the Proton donor in the catalytic mechanism. Residues cysteine 149, cysteine 151, and cysteine 154 each coordinate Zn(2+). Glutamate 308 (nucleophile) is an active-site residue. Residues tryptophan 316 and 356–359 (EKLH) contribute to the substrate site.

It belongs to the glycosyl hydrolase 42 family. Homotrimer.

It catalyses the reaction Hydrolysis of terminal non-reducing beta-D-galactose residues in beta-D-galactosides.. Inhibited by zinc, cobalt and copper ions. Involved in galactan degradation. Hydrolyzes galactooligosaccharides released by the endo-beta-1,4-galactanase GanB from galactan. Degrades galactotetraose, galactotriose and galactobiose, generating galactose as the end product. It is unable to use lactose. In vitro, shows maximal activity with o-nitrophenyl-beta-D-galactopyranoside (ONPG) and p-nitrophenyl-beta-D-galactopyranoside (PNPG) as substrates, trace activity with p-nitrophenyl-alpha-L-arabinopyranoside and o-nitrophenyl-beta-D-fucopyranoside as substrates, but no activity with p-nitrophenyl-alpha-D-galactopyranoside, p-nitrophenyl-beta-D-glucopyranoside, o-nitrophenyl-beta-D-xylopyranoside, p-nitrophenyl-beta-D-mannopyranoside or p-nitrophenyl-alpha-L-arabinofuranoside as substrates. This chain is Beta-galactosidase GanA, found in Bacillus subtilis (strain 168).